Reading from the N-terminus, the 1099-residue chain is DNA-directed RNA polymerase subunit beta (1099 aa).

The protein belongs to the RNA polymerase beta chain family. In plastids the minimal PEP RNA polymerase catalytic core is composed of four subunits: alpha, beta, beta', and beta''. When a (nuclear-encoded) sigma factor is associated with the core the holoenzyme is formed, which can initiate transcription.

It is found in the plastid. It localises to the chloroplast. It catalyses the reaction RNA(n) + a ribonucleoside 5'-triphosphate = RNA(n+1) + diphosphate. Functionally, DNA-dependent RNA polymerase catalyzes the transcription of DNA into RNA using the four ribonucleoside triphosphates as substrates. The chain is DNA-directed RNA polymerase subunit beta from Bigelowiella natans (Pedinomonas minutissima).